The primary structure comprises 629 residues: MFYQDPFDVIIIGGGHAGTEAAMAAARMGQQTLLLTHNIDTLGQMSCNPAIGGIGKGHLVKEVDALGGLMAKAIDQAGIQFRILNASKGPAVRATRAQADRVLYRQAVRTALENQPNLMIFQQAVEDLIVENDRVVGAVTQMGLKFRAKAVVLTVGTFLDGKIHIGLDNYSGGRAGDPPSIPLSRRLRELPLRVSRLKTGTPPRIDARTIDFSVLAQQHGDNPMPVFSFMGNASQHPQQVPCYITHTNEKTHDVIRNNLDRSPMYAGVIEGIGPRYCPSIEDKVMRFADRNQHQIFLEPEGLTSNEIYPNGISTSLPFDVQMQIVRSMQGMENAKIVRPGYAIEYDFFDPRDLKPTLESKFIHGLFFAGQINGTTGYEEAAAQGLLAGLNAARLSADKEGWAPARSQAYLGVLVDDLCTLGTKEPYRMFTSRAEYRLMLREDNADLRLTEMGRELGLVDDERWARFNEKLENIERERQRLKSTWVTPSAESADEVNAHLTTPLSREASGEDLLRRPEMTYAQLTSLAAFAPALEDEQAAEQVEIQVKYEGYIARQQDEIEKQLRNENTLLPATLDYRQVSGLSNEVIAKLNDHKPASIGQASRISGVTPVAISILLVWLKKQGMLRRSA.

FAD contacts are provided by residues 13–18, V125, and S180; that span reads GGGHAG. Position 273 to 287 (273 to 287) interacts with NAD(+); it reads GPRYCPSIEDKVMRF. Residue Q370 participates in FAD binding.

Belongs to the MnmG family. Homodimer. Heterotetramer of two MnmE and two MnmG subunits. FAD is required as a cofactor.

The protein resides in the cytoplasm. Its function is as follows. NAD-binding protein involved in the addition of a carboxymethylaminomethyl (cmnm) group at the wobble position (U34) of certain tRNAs, forming tRNA-cmnm(5)s(2)U34. This is tRNA uridine 5-carboxymethylaminomethyl modification enzyme MnmG from Salmonella choleraesuis (strain SC-B67).